We begin with the raw amino-acid sequence, 584 residues long: Tricyclene synthase 1e20, chloroplastic (584 aa).

A chloroplast-targeting transit peptide spans 1–45; the sequence is MIYIWICFYLQTTLLPCSLSTRTKFAICHNTSKLHRAAYKTSRWN. 3 N-linked (GlcNAc...) asparagine glycosylation sites follow: Asn30, Asn209, and Asn322. Asp341 and Asp345 together coordinate Mg(2+). The DDXXD motif motif lies at 341–345; it reads DDIFD. N-linked (GlcNAc...) asparagine glycans are attached at residues Asn387 and Asn468. Mg(2+)-binding residues include Asn485, Ser489, and Glu493. Asn512 is a glycosylation site (N-linked (GlcNAc...) asparagine).

It belongs to the terpene synthase family. Tpsg subfamily. The cofactor is Mg(2+). Requires Mn(2+) as cofactor. Accumulates at low levels in flowers; mostly expressed in both upper and lower petal lobes, and, to a lower extent, in tube and stamens.

Its subcellular location is the plastid. It localises to the chloroplast stroma. It catalyses the reaction (2E)-geranyl diphosphate = tricyclene + diphosphate. The catalysed reaction is (2E)-geranyl diphosphate = beta-myrcene + diphosphate. It functions in the pathway secondary metabolite biosynthesis; terpenoid biosynthesis. In terms of biological role, may contribute to floral scent emission. The chain is Tricyclene synthase 1e20, chloroplastic (1e20) from Antirrhinum majus (Garden snapdragon).